Reading from the N-terminus, the 943-residue chain is 2-oxoglutarate dehydrogenase E1 component (943 aa).

This sequence belongs to the alpha-ketoglutarate dehydrogenase family. As to quaternary structure, homodimer. Part of the 2-oxoglutarate dehydrogenase (OGDH) complex composed of E1 (2-oxoglutarate dehydrogenase), E2 (dihydrolipoamide succinyltransferase) and E3 (dihydrolipoamide dehydrogenase); the complex contains multiple copies of the three enzymatic components (E1, E2 and E3). Requires thiamine diphosphate as cofactor.

The enzyme catalyses N(6)-[(R)-lipoyl]-L-lysyl-[protein] + 2-oxoglutarate + H(+) = N(6)-[(R)-S(8)-succinyldihydrolipoyl]-L-lysyl-[protein] + CO2. Functionally, E1 component of the 2-oxoglutarate dehydrogenase (OGDH) complex which catalyzes the decarboxylation of 2-oxoglutarate, the first step in the conversion of 2-oxoglutarate to succinyl-CoA and CO(2). The sequence is that of 2-oxoglutarate dehydrogenase E1 component (sucA) from Azotobacter vinelandii.